Reading from the N-terminus, the 121-residue chain is Cell division protein FtsB (121 aa).

Topologically, residues 1–6 (MRNWRW) are cytoplasmic. The helical transmembrane segment at 7 to 24 (LLLVLAVLLAWLQYRFWF) threads the bilayer. Residues 25–121 (GPGNSGEVMM…PEPIDPVDHP (97 aa)) are Periplasmic-facing. Positions 31 to 66 (EVMMLEAQVAHQTQDNEGLRQRNQALAAEVKDLKDG) form a coiled coil. The tract at residues 92–121 (EDAPLPAPASPEAPAPPQQAPEPIDPVDHP) is disordered. Positions 96–115 (LPAPASPEAPAPPQQAPEPI) are enriched in pro residues.

It belongs to the FtsB family. In terms of assembly, part of a complex composed of FtsB, FtsL and FtsQ.

The protein localises to the cell inner membrane. Essential cell division protein. May link together the upstream cell division proteins, which are predominantly cytoplasmic, with the downstream cell division proteins, which are predominantly periplasmic. The sequence is that of Cell division protein FtsB from Xanthomonas euvesicatoria pv. vesicatoria (strain 85-10) (Xanthomonas campestris pv. vesicatoria).